We begin with the raw amino-acid sequence, 116 residues long: Large ribosomal subunit protein bL20 (116 aa).

It belongs to the bacterial ribosomal protein bL20 family.

Its function is as follows. Binds directly to 23S ribosomal RNA and is necessary for the in vitro assembly process of the 50S ribosomal subunit. It is not involved in the protein synthesizing functions of that subunit. This is Large ribosomal subunit protein bL20 from Mycoplasmopsis pulmonis (strain UAB CTIP) (Mycoplasma pulmonis).